Consider the following 301-residue polypeptide: Rhodopsin (301 aa).

Topologically, residues 1-18 are extracellular; that stretch reads LHMIHLHWYQYPPMNPMM. Residues 19-43 form a helical membrane-spanning segment; sequence YPLLLIFMLFTGILCLAGNFVTIWV. The Cytoplasmic segment spans residues 44 to 55; sequence FMNTKSLRTPAN. Residues 56-78 form a helical membrane-spanning segment; the sequence is LLVVNLAMSDFLMMFTMFPPMMV. Topologically, residues 79-92 are extracellular; it reads TCYYHTWTLGPTFC. The cysteines at positions 92 and 169 are disulfide-linked. The chain crosses the membrane as a helical span at residues 93 to 115; it reads QVYAFLGNLCGCASIWTMVFITF. The 'Ionic lock' involved in activated form stabilization signature appears at 116–118; it reads DRY. Topologically, residues 116-134 are cytoplasmic; it reads DRYNVIVKGVAGEPLSNKK. A helical transmembrane segment spans residues 135-155; the sequence is AAMWILSVWVLSTAWCMAPFF. At 156-182 the chain is on the extracellular side; sequence GWNSYVPEGNLTGCGTDYLSEDILSRS. Asn165 is a glycosylation site (N-linked (GlcNAc...) asparagine). A helical membrane pass occupies residues 183 to 204; the sequence is YLYIYSTWVYFLPLTITIYCYV. Topologically, residues 205–245 are cytoplasmic; that stretch reads FIIKAVAAHEKGMRDQAKKMGIKSLRNEEAQKTSAECRLAK. A helical membrane pass occupies residues 246-267; that stretch reads IAMTTVALWFIAWTPYLLINWV. Topologically, residues 268–278 are extracellular; it reads GMFARSYLSPV. The chain crosses the membrane as a helical span at residues 279–300; the sequence is YTIWGYVFAKANAVYNPIVYAI. N6-(retinylidene)lysine is present on Lys288.

Belongs to the G-protein coupled receptor 1 family. Opsin subfamily. As to quaternary structure, homodimer. Interacts with GNAQ. Post-translationally, contains one covalently linked retinal chromophore.

Its subcellular location is the cell projection. It is found in the rhabdomere membrane. Its function is as follows. Photoreceptor required for image-forming vision at low light intensity. Can use both retinal and 3-dehydroretinal as visual pigment. Light-induced isomerization of 11-cis to all-trans retinal triggers a conformational change that activates signaling via G-proteins. Signaling via GNAQ probably mediates the activation of phospholipase C. This is Rhodopsin (RHO) from Faxonius virilis (Virile crayfish).